The following is a 510-amino-acid chain: Glycogen synthase (510 aa).

Lys-18 is an ADP-alpha-D-glucose binding site.

Belongs to the glycosyltransferase 1 family. Bacterial/plant glycogen synthase subfamily.

It catalyses the reaction [(1-&gt;4)-alpha-D-glucosyl](n) + ADP-alpha-D-glucose = [(1-&gt;4)-alpha-D-glucosyl](n+1) + ADP + H(+). The protein operates within glycan biosynthesis; glycogen biosynthesis. Synthesizes alpha-1,4-glucan chains using ADP-glucose. In Bordetella parapertussis (strain 12822 / ATCC BAA-587 / NCTC 13253), this protein is Glycogen synthase.